The primary structure comprises 147 residues: Alpha-amylase/trypsin inhibitor (147 aa).

An N-terminal signal peptide occupies residues 1–21 (MASDHRRFVLSGAVLLSVLAV).

The protein belongs to the protease inhibitor I6 (cereal trypsin/alpha-amylase inhibitor) family. Post-translationally, five disulfide bonds, which are essential for the inhibitor activity, are probably present. Endosperm.

The protein resides in the secreted. Its function is as follows. Alpha-amylase/trypsin inhibitor. This chain is Alpha-amylase/trypsin inhibitor, found in Hordeum vulgare (Barley).